We begin with the raw amino-acid sequence, 99 residues long: Plastocyanin (99 aa).

One can recognise a Plastocyanin-like domain in the interval 1-99 (AEVLLGSSDG…AGMVGKVTVN (99 aa)). Positions 37, 84, 87, and 92 each coordinate Cu cation.

This sequence belongs to the plastocyanin family. Requires Cu(2+) as cofactor.

Its subcellular location is the plastid. The protein resides in the chloroplast thylakoid membrane. In terms of biological role, participates in electron transfer between P700 and the cytochrome b6-f complex in photosystem I. The polypeptide is Plastocyanin (PETE) (Lactuca sativa (Garden lettuce)).